The following is an 821-amino-acid chain: Frameshifted structural polyprotein (821 aa).

The segment at 1 to 106 is disordered; that stretch reads MNRGFFNMLG…KPKPGKRQRM (106 aa). Residues 38–49 are compositionally biased toward polar residues; that stretch reads LASQIQQLTTAV. Residues 67–106 are compositionally biased toward basic residues; that stretch reads PPPRQKKQAPKQPPKPKKPKTQEKKKKQPAKPKPGKRQRM. The interval 93 to 101 is ribosome-binding; it reads KQPAKPKPG. Residues 114 to 264 form the Peptidase S3 domain; it reads RLFDVKNEDG…KTTPEGTEEW (151 aa). Active-site charge relay system residues include His-141, Asp-163, and Ser-215. Positions 265–279 are functions as an uncleaved signal peptide for the precursor of protein E3/E2; that stretch reads SAAPLVTAMCLLGNV. Asn-278 is a glycosylation site (N-linked (GlcNAc...) asparagine; by host). A disulfide bridge connects residues Cys-283 and Cys-289. N-linked (GlcNAc...) asparagine; by host glycans are attached at residues Asn-524 and Asn-646. The chain crosses the membrane as a helical span at residues 696–716; the sequence is ILAVASATVAMMIGVTVAVLC. S-palmitoyl cysteine; by host attachment occurs at residues Cys-724, Cys-744, and Cys-745. The next 2 membrane-spanning stretches (helical) occupy residues 726–746 and 764–784; these read TPYA…LCCV and NSQP…IVLM.

The protein belongs to the alphavirus frameshifted structural polyprotein family. As to quaternary structure, homomultimer. Interacts with host karyopherin KPNA4; this interaction allows the nuclear import of the viral capsid protein. Interacts with spike glycoprotein E2. Interacts with host IRAK1; the interaction leads to inhibition of IRAK1-dependent signaling. The precursor of protein E3/E2 and E1 form a heterodimer shortly after synthesis. In terms of assembly, processing of the precursor of protein E3/E2 into E2 and E3 results in a heterodimer of the spike glycoproteins E2 and E1. Spike at virion surface are constituted of three E2-E1 heterodimers. In terms of processing, specific enzymatic cleavages in vivo yield mature proteins. Capsid protein is auto-cleaved during polyprotein translation, unmasking a signal peptide at the N-terminus of the precursor of E3/E2. The remaining polyprotein is then targeted to the host endoplasmic reticulum, where host signal peptidase cleaves it into pE2 and TF. pE2 is further processed to mature E3 and E2 by host furin in trans-Golgi vesicle. Post-translationally, palmitoylated via thioester bonds. These palmitoylations may induce disruption of the C-terminus transmembrane. This would result in the reorientation of E2 C-terminus from lumenal to cytoplasmic side. Palmitoylated via thioester bonds.

It is found in the virion. Its subcellular location is the host cytoplasm. It localises to the host cell membrane. The protein resides in the host nucleus. The protein localises to the virion membrane. The enzyme catalyses Autocatalytic release of the core protein from the N-terminus of the togavirus structural polyprotein by hydrolysis of a -Trp-|-Ser- bond.. In terms of biological role, forms an icosahedral capsid with a T=4 symmetry composed of 240 copies of the capsid protein surrounded by a lipid membrane through which penetrate 80 spikes composed of trimers of E1-E2 heterodimers. The capsid protein binds to the viral RNA genome at a site adjacent to a ribosome binding site for viral genome translation following genome release. Possesses a protease activity that results in its autocatalytic cleavage from the nascent structural protein. Following its self-cleavage, the capsid protein transiently associates with ribosomes, and within several minutes the protein binds to viral RNA and rapidly assembles into icosahedric core particles. The resulting nucleocapsid eventually associates with the cytoplasmic domain of the spike glycoprotein E2 at the cell membrane, leading to budding and formation of mature virions. In case of infection, new virions attach to target cells and after clathrin-mediated endocytosis their membrane fuses with the host endosomal membrane. This leads to the release of the nucleocapsid into the cytoplasm, followed by an uncoating event necessary for the genomic RNA to become accessible. The uncoating might be triggered by the interaction of capsid proteins with ribosomes. Binding of ribosomes would release the genomic RNA since the same region is genomic RNA-binding and ribosome-binding. Specifically inhibits interleukin-1 receptor-associated kinase 1/IRAK1-dependent signaling during viral entry, representing a means by which the alphaviruses may evade innate immune detection and activation prior to viral gene expression. Its function is as follows. Provides the signal sequence for the translocation of the precursor of protein E3/E2 to the host endoplasmic reticulum. Furin-cleaved E3 remains associated with spike glycoprotein E1 and mediates pH protection of the latter during the transport via the secretory pathway. After virion release from the host cell, the assembly protein E3 is gradually released in the extracellular space. Functionally, plays an essential role in viral attachment to target host cell, by binding to the cell receptor. Synthesized as a pE2 precursor which is processed by furin at the cell membrane just before virion budding, giving rise to E2-E1 heterodimer. The pE2-E1 heterodimer is stable, whereas E2-E1 is unstable and dissociate at low pH. pE2 is processed at the last step, presumably to avoid E1 fusion activation before its final export to cell surface. E2 C-terminus contains a transitory transmembrane that would be disrupted by palmitoylation, resulting in reorientation of the C-terminal tail from lumenal to cytoplasmic side. This step is critical since E2 C-terminus is involved in budding by interacting with capsid proteins. This release of E2 C-terminus in cytoplasm occurs lately in protein export, and precludes premature assembly of particles at the endoplasmic reticulum membrane. Plays a role in viral assembly and release. The protein is Frameshifted structural polyprotein of Sindbis virus (SINV).